The chain runs to 360 residues: DNA replication and repair protein RecF (360 aa).

30-37 contributes to the ATP binding site; the sequence is GRNAQGKT.

Belongs to the RecF family.

It is found in the cytoplasm. Functionally, the RecF protein is involved in DNA metabolism; it is required for DNA replication and normal SOS inducibility. RecF binds preferentially to single-stranded, linear DNA. It also seems to bind ATP. This chain is DNA replication and repair protein RecF, found in Desulforudis audaxviator (strain MP104C).